The chain runs to 349 residues: Interferon regulatory factor 2 (349 aa).

A DNA-binding region (IRF tryptophan pentad repeat) is located at residues 5-113 (RMRMRPWLEE…NAFRVYRMLP (109 aa)). N6-acetyllysine is present on residues Lys-75 and Lys-78. A disordered region spans residues 117–148 (RPSKKGKKPKTEKEDKVKHIKQEPVESSLGLS). Residues 125-140 (PKTEKEDKVKHIKQEP) are compositionally biased toward basic and acidic residues. Lys-137 is covalently cross-linked (Glycyl lysine isopeptide (Lys-Gly) (interchain with G-Cter in SUMO); alternate). Lys-137 participates in a covalent cross-link: Glycyl lysine isopeptide (Lys-Gly) (interchain with G-Cter in SUMO2); alternate. A Glycyl lysine isopeptide (Lys-Gly) (interchain with G-Cter in SUMO) cross-link involves residue Lys-166. Ser-225 carries the phosphoserine modification. A compositionally biased stretch (polar residues) spans 228–239 (SSYAESETTDSV). The disordered stretch occupies residues 228 to 251 (SSYAESETTDSVPSDEESAEGRPH). A Glycyl lysine isopeptide (Lys-Gly) (interchain with G-Cter in SUMO2) cross-link involves residue Lys-260. Lys-293 is covalently cross-linked (Glycyl lysine isopeptide (Lys-Gly) (interchain with G-Cter in SUMO)). Residues 297–349 (NPVPYNSSWPPFQDLPLSSSMTPASSSSRPDRETRASVIKKTSDITQARVKSC) form a disordered region. The segment covering 314-324 (SSSMTPASSSS) has biased composition (low complexity).

This sequence belongs to the IRF family. As to quaternary structure, interacts with BRD7, IRF2BP1 and IRF2BP2. Interacts with CREBBP in growing cells; the interaction acetylates IRF2 and regulates IRF2-dependent H4 promoter activity. Acetylated by CBP/ p300 during cell-growth. Acetylation on Lys-75 is required for stimulation of H4 promoter activity. Post-translationally, the major sites of sumoylation are Lys-137 and Lys-293. Sumoylation with SUMO1 increases its transcriptional repressor activity on IRF1 and diminishes its ability to activate ISRE and H4 promoter. In terms of tissue distribution, expressed throughout the epithelium of the colon. Also expressed in lamina propria.

Its subcellular location is the nucleus. In terms of biological role, specifically binds to the upstream regulatory region of type I IFN and IFN-inducible MHC class I genes (the interferon consensus sequence (ICS)) and represses those genes. Also acts as an activator for several genes including H4 and IL7. Constitutively binds to the ISRE promoter to activate IL7. Involved in cell cycle regulation through binding the site II (HiNF-M) promoter region of H4 and activating transcription during cell growth. Antagonizes IRF1 transcriptional activation. This is Interferon regulatory factor 2 (IRF2) from Homo sapiens (Human).